The primary structure comprises 889 residues: Protein SEY1 homolog (889 aa).

Over M1 to N801 the chain is Cytoplasmic. The GB1/RHD3-type G domain maps to G31–C277. Residue G41 to S48 coordinates GTP. A disordered region spans residues R429–T449. The stretch at L679–S699 forms a coiled coil. A helical transmembrane segment spans residues V802–T822. Residues R823–F825 lie on the Lumenal side of the membrane. The helical transmembrane segment at F826–V846 threads the bilayer. The Cytoplasmic portion of the chain corresponds to F847–D889.

Belongs to the TRAFAC class dynamin-like GTPase superfamily. GB1/RHD3 GTPase family. RHD3 subfamily.

Its subcellular location is the endoplasmic reticulum membrane. Its function is as follows. Probable GTP-binding protein involved in generating and maintaining the structure of the tubular endoplasmic reticulum network. This Plasmodium vivax (strain Salvador I) protein is Protein SEY1 homolog.